We begin with the raw amino-acid sequence, 241 residues long: ATP synthase subunit a (241 aa).

A run of 5 helical transmembrane segments spans residues 30 to 50 (GQVF…VLVG), 89 to 109 (LPFI…GALI), 128 to 148 (INTT…AGLS), 193 to 213 (LAVG…VMLL), and 214 to 234 (GLFT…FYIG).

Belongs to the ATPase A chain family. In terms of assembly, F-type ATPases have 2 components, CF(1) - the catalytic core - and CF(0) - the membrane proton channel. CF(1) has five subunits: alpha(3), beta(3), gamma(1), delta(1), epsilon(1). CF(0) has four main subunits: a, b, b' and c.

It is found in the cellular thylakoid membrane. Functionally, key component of the proton channel; it plays a direct role in the translocation of protons across the membrane. The sequence is that of ATP synthase subunit a from Synechococcus sp. (strain CC9902).